The primary structure comprises 194 residues: Large ribosomal subunit protein bL9 (194 aa).

It belongs to the bacterial ribosomal protein bL9 family.

Functionally, binds to the 23S rRNA. The polypeptide is Large ribosomal subunit protein bL9 (Rhodopseudomonas palustris (strain BisA53)).